We begin with the raw amino-acid sequence, 808 residues long: Protein Ac66 (808 aa).

Over residues P132–P141 the composition is skewed to pro residues. Residues P132–G151 are disordered.

Interacts with the putative E3 ligase IE0 and with viral ubiquitin/vUbi.

It is found in the host nucleus. It localises to the host cytoplasm. Plays an essential role in the efficient egress of nucleocapsids from the host nucleus to the cytoplasm. The polypeptide is Protein Ac66 (Ac66) (Lepidoptera (butterflies and moths)).